The chain runs to 426 residues: Glutamate-1-semialdehyde 2,1-aminomutase (426 aa).

Lys265 carries the N6-(pyridoxal phosphate)lysine modification.

This sequence belongs to the class-III pyridoxal-phosphate-dependent aminotransferase family. HemL subfamily. In terms of assembly, homodimer. Pyridoxal 5'-phosphate is required as a cofactor.

It is found in the cytoplasm. The enzyme catalyses (S)-4-amino-5-oxopentanoate = 5-aminolevulinate. It participates in porphyrin-containing compound metabolism; protoporphyrin-IX biosynthesis; 5-aminolevulinate from L-glutamyl-tRNA(Glu): step 2/2. In Salmonella enteritidis PT4 (strain P125109), this protein is Glutamate-1-semialdehyde 2,1-aminomutase.